Consider the following 494-residue polypeptide: PIGF/3-ketodihydrosphingosine reductase fusion protein (494 aa).

Gly-20, Ser-22, and Gly-24 together coordinate NADPH. Positions 20–24 match the GXSXG motif; that stretch reads GGSQG. Leu-25 serves as a coordination point for NADP(+). NADPH is bound by residues Arg-45 and Lys-49. Val-54 lines the NADP(+) pocket. NADPH is bound by residues Asp-74 and Leu-75. The helical transmembrane segment at 148-168 threads the bilayer; it reads ILLVGSLLSSLPIIGYSAYSP. NADP(+) is bound by residues Tyr-166, Lys-170, and Ile-199. Tyr-166 serves as the catalytic Proton acceptor. Residue Lys-170 is the Lowers pKa of active site Tyr of the active site. Transmembrane regions (helical) follow at residues 264-284, 312-332, 370-390, 402-422, 444-464, and 473-493; these read HDNPILEYLFALVSLLAWPFY, IFTLLLTFTQLTIFYLSLNCL, LAGAASMLIGSLLISFILVAF, YFCALTLSVFTVYPLASTLAF, LRSWGPIIGAWFGAFPIPLDW, and ITIVIGAFLGYAFAAIVGEIL.

The protein in the N-terminal section; belongs to the short-chain dehydrogenases/reductases (SDR) family. It in the C-terminal section; belongs to the PIGF family.

It is found in the endoplasmic reticulum membrane. The catalysed reaction is sphinganine + NADP(+) = 3-oxosphinganine + NADPH + H(+). It participates in glycolipid biosynthesis; glycosylphosphatidylinositol-anchor biosynthesis. Its pathway is lipid metabolism; sphingolipid metabolism. Functionally, acts in the GPI biosynthetic pathway between GlcNAc-PI synthesis and GPI transfer to protein. Required for the formation of complete GPI precursors CP1 and CP2. Catalyzes the reduction of 3'-oxosphinganine (3-ketodihydrosphingosine/KDS) to sphinganine (dihydrosphingosine/DHS), the second step of de novo sphingolipid biosynthesis. The chain is PIGF/3-ketodihydrosphingosine reductase fusion protein from Schizosaccharomyces pombe (strain 972 / ATCC 24843) (Fission yeast).